The chain runs to 913 residues: Protein translocase subunit SecA (913 aa).

Residues glutamine 87, 105 to 109 (GEGKT), and aspartate 517 contribute to the ATP site. 2 disordered regions span residues 568 to 588 (ESRR…DPGS) and 871 to 913 (EVAV…GKLS). Zn(2+) contacts are provided by cysteine 897, cysteine 899, cysteine 908, and histidine 909. A compositionally biased stretch (basic residues) spans 903-913 (KKYKQCHGKLS).

The protein belongs to the SecA family. In terms of assembly, monomer and homodimer. Part of the essential Sec protein translocation apparatus which comprises SecA, SecYEG and auxiliary proteins SecDF-YajC and YidC. Zn(2+) serves as cofactor.

It localises to the cell inner membrane. The protein resides in the cytoplasm. The enzyme catalyses ATP + H2O + cellular proteinSide 1 = ADP + phosphate + cellular proteinSide 2.. Functionally, part of the Sec protein translocase complex. Interacts with the SecYEG preprotein conducting channel. Has a central role in coupling the hydrolysis of ATP to the transfer of proteins into and across the cell membrane, serving both as a receptor for the preprotein-SecB complex and as an ATP-driven molecular motor driving the stepwise translocation of polypeptide chains across the membrane. The chain is Protein translocase subunit SecA from Coxiella burnetii (strain RSA 493 / Nine Mile phase I).